Here is a 319-residue protein sequence, read N- to C-terminus: Cobalamin biosynthesis protein CbiB (319 aa).

The next 4 helical transmembrane spans lie at 56-76 (VMWVVVVGVTWGVAWGVLALA), 82-102 (WFGWSVEVWMIFTTLAGRSLA), 153-173 (VDGIIAPLFFLFLGGAPLAMA), and 296-316 (LMWVASTLALALFIAARCGLS).

This sequence belongs to the CobD/CbiB family.

It is found in the cell membrane. The protein operates within cofactor biosynthesis; adenosylcobalamin biosynthesis. In terms of biological role, converts cobyric acid to cobinamide by the addition of aminopropanol on the F carboxylic group. However, the true cosubstrate could be (R)-1-amino-2-propanol O-2-phosphate, leading to cobinamide phosphate. The chain is Cobalamin biosynthesis protein CbiB from Salmonella paratyphi A (strain ATCC 9150 / SARB42).